The primary structure comprises 371 residues: MESLWKLSYLLEPASLALILTAVSVAYASASRALDHGREMERNLDFSEASITLDRSQALMIPLASSCSLLLMFYLFSSVSHLVTAFTAVASAMALFFCLSPYVNCVRSRLGVGDPFVSRCCSKPFTRLQGLLVAICVGTVVAWLVSGHWLLNNLLGISICIAFVSHVRLPNIKICALLLVCLFVYDVFWVFFSERFFGANVMVSVATQKASNPVHTVANKLSLPGLQLITKKLELPVKLVFPRSLMGGLAPGSSPGDYMMLGLGDMAIPGMLLALVLSFDHRKIKDMSVSQDMPPSKQRKYVWYALTGYGVGLVTALAAGILSQSPQPALLYLVPSTLGPVMYMSWLRNELWELWEGSRPIINDKAHLLEV.

The Lumenal portion of the chain corresponds to M1–K6. The chain crosses the membrane as a helical span at residues L7–Y27. The Cytoplasmic segment spans residues A28–Q57. The chain crosses the membrane as a helical span at residues A58–L75. The Lumenal segment spans residues F76–S80. The chain crosses the membrane as a helical span at residues H81–V103. The Cytoplasmic segment spans residues N104 to K123. Residues P124 to S146 traverse the membrane as a helical segment. Topologically, residues G147–W149 are lumenal. Residues L150–V167 form a helical membrane-spanning segment. Over R168–N171 the chain is Cytoplasmic. A helical membrane pass occupies residues I172–F192. D186 is an active-site residue. The Lumenal portion of the chain corresponds to S193–Y258. The helical transmembrane segment at M259 to F279 threads the bilayer. Residue D265 is part of the active site. Over D280–Y301 the chain is Cytoplasmic. Residues V302–L322 form a helical membrane-spanning segment. The Lumenal segment spans residues S323–P326. The helical transmembrane segment at Q327 to L347 threads the bilayer. The PAL motif lies at P328–L330. The Cytoplasmic segment spans residues R348–V371.

This sequence belongs to the peptidase A22B family.

It localises to the endosome membrane. Its function is as follows. Intramembrane-cleaving aspartic protease (I-CLiP) that cleaves type II membrane signal peptides in the hydrophobic plane of the membrane. The polypeptide is Signal peptide peptidase-like 1 (SPPL1) (Oryza sativa subsp. japonica (Rice)).